The chain runs to 776 residues: Ion-translocating oxidoreductase complex subunit C (776 aa).

4Fe-4S ferredoxin-type domains are found at residues 368 to 397 (MGAP…QQLY) and 407 to 436 (KATA…VQYF). Positions 377, 380, 383, 387, 416, 419, 422, and 426 each coordinate [4Fe-4S] cluster. 5 stretches are compositionally biased toward basic and acidic residues: residues 534–543 (ARARQAEKVQ), 597–611 (ADEK…RKAA), 633–647 (ADEK…RKAA), 669–683 (ADEK…RKAA), and 705–719 (ADEK…RKAT). A disordered region spans residues 534-754 (ARARQAEKVQ…ENEAEDPRKA (221 aa)). The span at 721 to 743 (EAAIARAKARKAAQAGERAQAAN) shows a compositional bias: low complexity.

It belongs to the 4Fe4S bacterial-type ferredoxin family. RnfC subfamily. As to quaternary structure, the complex is composed of six subunits: RnfA, RnfB, RnfC, RnfD, RnfE and RnfG. [4Fe-4S] cluster serves as cofactor.

Its subcellular location is the cell inner membrane. In terms of biological role, part of a membrane-bound complex that couples electron transfer with translocation of ions across the membrane. This chain is Ion-translocating oxidoreductase complex subunit C, found in Cronobacter sakazakii (strain ATCC BAA-894) (Enterobacter sakazakii).